Reading from the N-terminus, the 414-residue chain is Glutamyl-tRNA reductase (414 aa).

Residues 48 to 51 (TCNR), S104, 109 to 111 (EAQ), and Q115 each bind substrate. Catalysis depends on C49, which acts as the Nucleophile. 184 to 189 (GAGEMI) serves as a coordination point for NADP(+).

It belongs to the glutamyl-tRNA reductase family. Homodimer.

It carries out the reaction (S)-4-amino-5-oxopentanoate + tRNA(Glu) + NADP(+) = L-glutamyl-tRNA(Glu) + NADPH + H(+). It functions in the pathway porphyrin-containing compound metabolism; protoporphyrin-IX biosynthesis; 5-aminolevulinate from L-glutamyl-tRNA(Glu): step 1/2. Its function is as follows. Catalyzes the NADPH-dependent reduction of glutamyl-tRNA(Glu) to glutamate 1-semialdehyde (GSA). This Methylobacillus flagellatus (strain ATCC 51484 / DSM 6875 / VKM B-1610 / KT) protein is Glutamyl-tRNA reductase.